The sequence spans 455 residues: Protein png1 (455 aa).

A disordered region spans residues 1–110; sequence MTDGRQQHTR…LPVFPSPPRD (110 aa). Over residues 38 to 53 the composition is skewed to low complexity; that stretch reads SLQEQSRSRSRTQSPS. The span at 59-73 shows a compositional bias: pro residues; it reads HTPPHPSRAPPPPPT. Residues 74 to 98 show a composition bias toward low complexity; that stretch reads GAHYPSSQSPSQQHQQHQLPASSSL. Residues Cys199, Cys202, Cys231, and Cys236 each contribute to the Zn(2+) site. The tract at residues 408–455 is disordered; sequence NLIPREQTSGRPGEQKTPASMQDTPVDWVAAQQMGPGQSGPDRSQDGR.

It belongs to the transglutaminase-like superfamily. PNGase family.

In Aspergillus fumigatus (strain ATCC MYA-4609 / CBS 101355 / FGSC A1100 / Af293) (Neosartorya fumigata), this protein is Protein png1 (png1).